A 151-amino-acid chain; its full sequence is UPF0208 membrane protein YfbV (151 aa).

Transmembrane regions (helical) follow at residues 46 to 65 (YAIR…QIAL) and 69 to 91 (LGPA…WWLG).

The protein belongs to the UPF0208 family.

The protein localises to the cell inner membrane. The sequence is that of UPF0208 membrane protein YfbV from Shigella boydii serotype 18 (strain CDC 3083-94 / BS512).